Here is a 205-residue protein sequence, read N- to C-terminus: MARSKSSNNWLQEHVNDQYVHMAQKDGYRARAAYKLLEINDKDKLIRPGTVLADLGSTPGSWSQVAARIVGEKGKVFALDILDMDPVPGVDFIQGDFREEAVLREFEQLLDGRALDLVISDMAPNMSGMSAIDQARSFLLCELALEFARDHLKPGGHFLVKVFQGSDFQPYLKAMRELFDEVVTRKPKASRDRSSEIYLLGKGRR.

S-adenosyl-L-methionine contacts are provided by glycine 60, tryptophan 62, aspartate 80, aspartate 96, and aspartate 121. The active-site Proton acceptor is lysine 161.

The protein belongs to the class I-like SAM-binding methyltransferase superfamily. RNA methyltransferase RlmE family.

The protein resides in the cytoplasm. It catalyses the reaction uridine(2552) in 23S rRNA + S-adenosyl-L-methionine = 2'-O-methyluridine(2552) in 23S rRNA + S-adenosyl-L-homocysteine + H(+). Its function is as follows. Specifically methylates the uridine in position 2552 of 23S rRNA at the 2'-O position of the ribose in the fully assembled 50S ribosomal subunit. The sequence is that of Ribosomal RNA large subunit methyltransferase E from Chromobacterium violaceum (strain ATCC 12472 / DSM 30191 / JCM 1249 / CCUG 213 / NBRC 12614 / NCIMB 9131 / NCTC 9757 / MK).